Here is a 39-residue protein sequence, read N- to C-terminus: Cytochrome b559 subunit beta (39 aa).

The chain crosses the membrane as a helical span at residues 14-30 (WLTVHGLAVPTVSFLGS). His18 contacts heme.

It belongs to the PsbE/PsbF family. In terms of assembly, heterodimer of an alpha subunit and a beta subunit. PSII is composed of 1 copy each of membrane proteins PsbA, PsbB, PsbC, PsbD, PsbE, PsbF, PsbH, PsbI, PsbJ, PsbK, PsbL, PsbM, PsbT, PsbX, PsbY, PsbZ, Psb30/Ycf12, at least 3 peripheral proteins of the oxygen-evolving complex and a large number of cofactors. It forms dimeric complexes. It depends on heme b as a cofactor.

The protein resides in the plastid. It localises to the chloroplast thylakoid membrane. In terms of biological role, this b-type cytochrome is tightly associated with the reaction center of photosystem II (PSII). PSII is a light-driven water:plastoquinone oxidoreductase that uses light energy to abstract electrons from H(2)O, generating O(2) and a proton gradient subsequently used for ATP formation. It consists of a core antenna complex that captures photons, and an electron transfer chain that converts photonic excitation into a charge separation. This chain is Cytochrome b559 subunit beta, found in Lactuca sativa (Garden lettuce).